The sequence spans 400 residues: Chaperone protein DnaJ (400 aa).

In terms of domain architecture, J spans 4-69; sequence DYYETLGVTR…DKRRRYDQFG (66 aa). The CR-type zinc finger occupies 156-237; it reads GVEKTLKVKR…CYGEGIKLGE (82 aa). Residues C169, C172, C185, C188, C211, C214, C225, and C228 each coordinate Zn(2+). 4 CXXCXGXG motif repeats span residues 169–176, 185–192, 211–218, and 225–232; these read CEVCNGTG, CQTCHGSG, CPTCGGEG, and CTACYGEG.

The protein belongs to the DnaJ family. Homodimer. Zn(2+) is required as a cofactor.

The protein localises to the cytoplasm. Its function is as follows. Participates actively in the response to hyperosmotic and heat shock by preventing the aggregation of stress-denatured proteins and by disaggregating proteins, also in an autonomous, DnaK-independent fashion. Unfolded proteins bind initially to DnaJ; upon interaction with the DnaJ-bound protein, DnaK hydrolyzes its bound ATP, resulting in the formation of a stable complex. GrpE releases ADP from DnaK; ATP binding to DnaK triggers the release of the substrate protein, thus completing the reaction cycle. Several rounds of ATP-dependent interactions between DnaJ, DnaK and GrpE are required for fully efficient folding. Also involved, together with DnaK and GrpE, in the DNA replication of plasmids through activation of initiation proteins. This is Chaperone protein DnaJ from Chlorobium chlorochromatii (strain CaD3).